The following is a 609-amino-acid chain: MSRVIGIDLGTTNSCVAVMEGGEPVVIANAEGNRTTPSVVAFKNGERIVGEAAKRQAITNPDNTVISIKRHMGSAHKETLEGNQYTPEQISAMILQKLKADAEAYLGQSVTQAVITVPAYFNDSQRQATKDAGKIAGLEVLRIVNEPTAAALAYGMEKTEDQTVLVFDLGGGTFDVSILELSDGFFEVKATSGDNKLGGDDFDDVVMNYLVSEFKKEHGIDLSKDRMAQQRLKDAAEKAKKDLSGVLTTTISLPFITADATGPKHLEMNLTRAKFEELSAELVERTMGPTRQALKDAGLTPSELDRVILVGGSTRIPAVQEAIKKFTGKEPHKGVNPDEVVALGAAVQAGVLTGDVKDVVLLDVTPLSLGIETLGGVFTKLIDRNTTIPTSKSQVFSTAADNQTSVEIHVLQGERQMAGDNKSLGRFNLSDIPPAPRGIPQIEVSFDIDANGIVNVRAKDLGTGKEQRITITSNSGLSDDDIDRMVKDAELNAEADKQRKEQVEVRNEADQLVFTTEKTLKEVEGKIDQAEIDRANAAKDKVKAALEGSNFEEIKTAKDELSEIIQQISVKLYEQAAQAQAAQGGGAEGQEPKKDNVVDADYEVVDDKK.

Threonine 173 bears the Phosphothreonine; by autocatalysis mark. Positions 580-609 (QAAQGGGAEGQEPKKDNVVDADYEVVDDKK) are disordered. Over residues 598–609 (VDADYEVVDDKK) the composition is skewed to acidic residues.

The protein belongs to the heat shock protein 70 family.

In terms of biological role, acts as a chaperone. This chain is Chaperone protein DnaK, found in Brevibacillus brevis (strain 47 / JCM 6285 / NBRC 100599).